Consider the following 445-residue polypeptide: Eukaryotic peptide chain release factor subunit 1 (445 aa).

Belongs to the eukaryotic release factor 1 family. As to quaternary structure, heterodimer of two subunits, one of which binds GTP.

Its subcellular location is the cytoplasm. In terms of biological role, directs the termination of nascent peptide synthesis (translation) in response to the termination codon UGA. In Stylonchia UAA and UAG codes for glutamine. The protein is Eukaryotic peptide chain release factor subunit 1 (ERF1) of Stylonychia mytilus (Ciliate).